The chain runs to 271 residues: Tryptophan synthase alpha chain (271 aa).

Catalysis depends on proton acceptor residues glutamate 49 and aspartate 60.

This sequence belongs to the TrpA family. As to quaternary structure, tetramer of two alpha and two beta chains.

It catalyses the reaction (1S,2R)-1-C-(indol-3-yl)glycerol 3-phosphate + L-serine = D-glyceraldehyde 3-phosphate + L-tryptophan + H2O. It functions in the pathway amino-acid biosynthesis; L-tryptophan biosynthesis; L-tryptophan from chorismate: step 5/5. The alpha subunit is responsible for the aldol cleavage of indoleglycerol phosphate to indole and glyceraldehyde 3-phosphate. The protein is Tryptophan synthase alpha chain of Burkholderia multivorans (strain ATCC 17616 / 249).